The following is a 342-amino-acid chain: GTPase Obg (342 aa).

In terms of domain architecture, Obg spans 1–159 (MKFLDLCKVY…RTIWLRLKLI (159 aa)). An OBG-type G domain is found at 160 to 327 (ADAGLLGLPN…VLRALWAEID (168 aa)). GTP is bound by residues 166–173 (GLPNAGKS), 191–195 (FTTLV), 212–215 (DIPG), 279–282 (NKID), and 308–310 (SGV). Mg(2+) is bound by residues S173 and T193.

This sequence belongs to the TRAFAC class OBG-HflX-like GTPase superfamily. OBG GTPase family. Monomer. The cofactor is Mg(2+).

It is found in the cytoplasm. Its function is as follows. An essential GTPase which binds GTP, GDP and possibly (p)ppGpp with moderate affinity, with high nucleotide exchange rates and a fairly low GTP hydrolysis rate. Plays a role in control of the cell cycle, stress response, ribosome biogenesis and in those bacteria that undergo differentiation, in morphogenesis control. This is GTPase Obg from Cereibacter sphaeroides (strain ATCC 17025 / ATH 2.4.3) (Rhodobacter sphaeroides).